The sequence spans 65 residues: Large ribosomal subunit protein bL35 (65 aa).

This sequence belongs to the bacterial ribosomal protein bL35 family.

The protein is Large ribosomal subunit protein bL35 of Desulfitobacterium hafniense (strain DSM 10664 / DCB-2).